The following is a 339-amino-acid chain: Ribosome biogenesis protein BRX1 homolog (339 aa).

A disordered region spans residues Met1 to Ala34. The 190-residue stretch at Glu53–Gly242 folds into the Brix domain. The segment at Ala304 to Met339 is disordered. A compositionally biased stretch (basic residues) spans Pro320–Met339.

Belongs to the BRX1 family. Ubiquitous.

The protein localises to the nucleus. The protein resides in the nucleolus. Functionally, required for biogenesis of the 60S ribosomal subunit. The sequence is that of Ribosome biogenesis protein BRX1 homolog (brix1) from Xenopus laevis (African clawed frog).